A 487-amino-acid polypeptide reads, in one-letter code: MVTSLYRNGNGRLNSYTQDTANLGVVNQLCPLPKTPLFGTDGIRGKVGELLNASLALDLGFCAAQVLKATMPTPGPIIIGQDSRNSSDMLTTAITAGLTSAGVEVWQIGLCPTPCVAYLARNTEAMGGIMISASHNPPEDNGIKFFDHQGLKLSKGLAQQVEDLLRNTLESNSQRESSLSWGKYYHRRELIEQYLQQLSLSIPTDVNLEGMRIVLDLAWGAAVEIAPQVFKSLGAEVICLHDQPDGDRINVNCGSTHLNLLQQAVKEFGADLGVAFDGDADRVLAVDSEGRVVDGDYILYFWGQTLKAQDKLPNNLIIATVMANLGFEKAWQNLGGQLIRTAVGDQHVQAQMWETGAMLGGEQSGHIICHHHGVSGDGIQTALHLAALVRQSGRSLGALVEQSFQPYPQILRNVRVEDRERRCNWKDCNPLQIAIAEAQAAMGDRGRVLVRASGTEPLIRVMVESECAQSANYWTEHLIGVVQKYLA.

Ser-134 (phosphoserine intermediate) is an active-site residue. Residues Ser-134, Asp-277, Asp-279, and Asp-281 each coordinate Mg(2+). Ser-134 is modified (phosphoserine).

Belongs to the phosphohexose mutase family. The cofactor is Mg(2+). Activated by phosphorylation.

It catalyses the reaction alpha-D-glucosamine 1-phosphate = D-glucosamine 6-phosphate. Functionally, catalyzes the conversion of glucosamine-6-phosphate to glucosamine-1-phosphate. This is Phosphoglucosamine mutase from Gloeothece citriformis (strain PCC 7424) (Cyanothece sp. (strain PCC 7424)).